Reading from the N-terminus, the 269-residue chain is Cytochrome c oxidase subunit 3 (269 aa).

The next 7 helical transmembrane spans lie at 21 to 41 (PWPMLLSFALLSLTLSLGLTM), 45 to 65 (IGNMNLVYLALLVVTLTSVFW), 90 to 110 (GFLLFVLSEVLIFAGLFWAYF), 138 to 160 (PLLNTIILLSSGATITYSHHALI), 167 to 187 (ALSGLFITIWLIIIFVTCQYI), 205 to 225 (FYAGTGLHFLHMVMLAVMLII), and 247 to 267 (ILYCHVLDIIWLFLYIVFYWW).

Belongs to the cytochrome c oxidase subunit 3 family. In terms of assembly, component of the cytochrome c oxidase (complex IV, CIV), a multisubunit enzyme composed of a catalytic core of 3 subunits and several supernumerary subunits. The complex exists as a monomer or a dimer and forms supercomplexes (SCs) in the inner mitochondrial membrane with ubiquinol-cytochrome c oxidoreductase (cytochrome b-c1 complex, complex III, CIII).

It is found in the mitochondrion inner membrane. The enzyme catalyses 4 Fe(II)-[cytochrome c] + O2 + 8 H(+)(in) = 4 Fe(III)-[cytochrome c] + 2 H2O + 4 H(+)(out). Functionally, component of the cytochrome c oxidase, the last enzyme in the mitochondrial electron transport chain which drives oxidative phosphorylation. The respiratory chain contains 3 multisubunit complexes succinate dehydrogenase (complex II, CII), ubiquinol-cytochrome c oxidoreductase (cytochrome b-c1 complex, complex III, CIII) and cytochrome c oxidase (complex IV, CIV), that cooperate to transfer electrons derived from NADH and succinate to molecular oxygen, creating an electrochemical gradient over the inner membrane that drives transmembrane transport and the ATP synthase. Cytochrome c oxidase is the component of the respiratory chain that catalyzes the reduction of oxygen to water. Electrons originating from reduced cytochrome c in the intermembrane space (IMS) are transferred via the dinuclear copper A center (CU(A)) of subunit 2 and heme A of subunit 1 to the active site in subunit 1, a binuclear center (BNC) formed by heme A3 and copper B (CU(B)). The BNC reduces molecular oxygen to 2 water molecules using 4 electrons from cytochrome c in the IMS and 4 protons from the mitochondrial matrix. The protein is Cytochrome c oxidase subunit 3 (COX3) of Candida glabrata (strain ATCC 2001 / BCRC 20586 / JCM 3761 / NBRC 0622 / NRRL Y-65 / CBS 138) (Yeast).